We begin with the raw amino-acid sequence, 635 residues long: BTB/POZ domain and ankyrin repeat-containing protein NPR2 (635 aa).

Residues 97–191 (SDADVDVADG…LYTGKLRPAP (95 aa)) form the BTB domain. A compositionally biased stretch (gly residues) spans 138-152 (AAGGGGGGGGGGGER). The tract at residues 138 to 157 (AAGGGGGGGGGGGERTGGRP) is disordered. A C2HC NPR-type zinc finger spans residues 194 to 208 (VVSCADPMCPHDSCP). Residues C197, C202, H204, and C207 each coordinate Zn(2+). 3 ANK repeats span residues 317–347 (KRVR…TLDD), 349–376 (NALH…NLNL), and 380–409 (RGYT…AVSQ). A salicylic acid-binding core (SBC) region spans residues 439 to 576 (ESNKDRLCID…FLEDDLPDSP (138 aa)). Residue R484 coordinates salicylate.

This sequence belongs to the plant 'ANKYRIN-BTB/POZ' family. 'NPR1-like' subfamily. Interacts with NRR. Interacts with TGAL1 and TGAL11.

The protein localises to the nucleus. It functions in the pathway protein modification; protein ubiquitination. Functionally, salicylic acid (SA)-binding substrate-specific adapter of an E3 ubiquitin-protein ligase complex (CUL3-RBX1-BTB) which mediates the ubiquitination and subsequent proteasomal degradation of target proteins. May be involved in regulating basal defense responses against pathogens, and may be involved in crosstalk between SA- and JA-dependent signaling pathways. Does not seem to be involved in defense response against the bacterial blight disease caused by Xanthomonas oryzae pv. oryzae (Xoo). Over-expression of NPR2/NH2 does not confer disease resistance to Xoo. This Oryza sativa subsp. japonica (Rice) protein is BTB/POZ domain and ankyrin repeat-containing protein NPR2.